The primary structure comprises 255 residues: MFKIGNLELQSRLLLGTGKFENEEVQSKAIEASETNVLTFAVRRMNLYDRNLPNPLANVNLKDFITFPNTAGAKTAQEAIRIAEIANHAGVCDMIKVEVIGDDETLLPDPFETYEVCKVLLEKGYTVCPYISNDLVLAQRLEELGVHAVMPLASPIGTGRGINNPLNLSYIIENASVPVIVDAGIGSPKDACHAMELGADGILLNTAISAAKDPVKMAEAMKLGINAGRLSYEAGRIPVKYTAQASSPSEGLGFL.

Lys-96 serves as the catalytic Schiff-base intermediate with DXP. 1-deoxy-D-xylulose 5-phosphate is bound by residues Gly-157, 183–184, and 205–206; these read AG and NT.

It belongs to the ThiG family. In terms of assembly, homotetramer. Forms heterodimers with either ThiH or ThiS.

It is found in the cytoplasm. The catalysed reaction is [ThiS sulfur-carrier protein]-C-terminal-Gly-aminoethanethioate + 2-iminoacetate + 1-deoxy-D-xylulose 5-phosphate = [ThiS sulfur-carrier protein]-C-terminal Gly-Gly + 2-[(2R,5Z)-2-carboxy-4-methylthiazol-5(2H)-ylidene]ethyl phosphate + 2 H2O + H(+). It participates in cofactor biosynthesis; thiamine diphosphate biosynthesis. Its function is as follows. Catalyzes the rearrangement of 1-deoxy-D-xylulose 5-phosphate (DXP) to produce the thiazole phosphate moiety of thiamine. Sulfur is provided by the thiocarboxylate moiety of the carrier protein ThiS. In vitro, sulfur can be provided by H(2)S. The protein is Thiazole synthase of Staphylococcus epidermidis (strain ATCC 35984 / DSM 28319 / BCRC 17069 / CCUG 31568 / BM 3577 / RP62A).